The following is a 636-amino-acid chain: 1-deoxy-D-xylulose-5-phosphate synthase (636 aa).

Residues histidine 84 and 125 to 127 (GHS) each bind thiamine diphosphate. Aspartate 156 lines the Mg(2+) pocket. Thiamine diphosphate-binding positions include 157–158 (GA), asparagine 185, phenylalanine 292, and glutamate 375. Asparagine 185 lines the Mg(2+) pocket.

Belongs to the transketolase family. DXPS subfamily. As to quaternary structure, homodimer. Mg(2+) serves as cofactor. It depends on thiamine diphosphate as a cofactor.

The enzyme catalyses D-glyceraldehyde 3-phosphate + pyruvate + H(+) = 1-deoxy-D-xylulose 5-phosphate + CO2. It participates in metabolic intermediate biosynthesis; 1-deoxy-D-xylulose 5-phosphate biosynthesis; 1-deoxy-D-xylulose 5-phosphate from D-glyceraldehyde 3-phosphate and pyruvate: step 1/1. Its function is as follows. Catalyzes the acyloin condensation reaction between C atoms 2 and 3 of pyruvate and glyceraldehyde 3-phosphate to yield 1-deoxy-D-xylulose-5-phosphate (DXP). The chain is 1-deoxy-D-xylulose-5-phosphate synthase from Cellvibrio japonicus (strain Ueda107) (Pseudomonas fluorescens subsp. cellulosa).